Reading from the N-terminus, the 173-residue chain is Translation initiation factor IF-3 (173 aa).

This sequence belongs to the IF-3 family. As to quaternary structure, monomer.

The protein resides in the cytoplasm. Its function is as follows. IF-3 binds to the 30S ribosomal subunit and shifts the equilibrium between 70S ribosomes and their 50S and 30S subunits in favor of the free subunits, thus enhancing the availability of 30S subunits on which protein synthesis initiation begins. This Campylobacter lari (strain RM2100 / D67 / ATCC BAA-1060) protein is Translation initiation factor IF-3.